Consider the following 166-residue polypeptide: Myosin regulatory light chain 2, ventricular/cardiac muscle isoform (166 aa).

Ser2 bears the N,N,N-trimethylserine mark. Asn14 carries the deamidated asparagine modification. Phosphoserine is present on Ser19. EF-hand domains are found at residues 24–59, 94–129, and 130–165; these read TQIQ…LGRV, DPEE…QAER, and FSKE…GEEK. Residues Asp37, Asn39, Asp41, and Asp48 each contribute to the Ca(2+) site. Thr52 carries the post-translational modification Phosphothreonine.

In terms of assembly, myosin is a hexamer of 2 heavy chains and 4 light chains. Interacts with MYOC. Post-translationally, N-terminus is methylated by METTL11A/NTM1. Phosphorylated by MYLK3 and MYLK2; promotes cardiac muscle contraction and function. Dephosphorylated by PPP1CB complexed to PPP1R12B. The phosphorylated form in adult is expressed as gradients across the heart from endocardium (low phosphorylation) to epicardium (high phosphorylation); regulates cardiac torsion and workload distribution.

The protein localises to the cytoplasm. The protein resides in the myofibril. It localises to the sarcomere. It is found in the a band. Its function is as follows. Contractile protein that plays a role in heart development and function. Following phosphorylation, plays a role in cross-bridge cycling kinetics and cardiac muscle contraction by increasing myosin lever arm stiffness and promoting myosin head diffusion; as a consequence of the increase in maximum contraction force and calcium sensitivity of contraction force. These events altogether slow down myosin kinetics and prolong duty cycle resulting in accumulated myosins being cooperatively recruited to actin binding sites to sustain thin filament activation as a means to fine-tune myofilament calcium sensitivity to force. During cardiogenesis plays an early role in cardiac contractility by promoting cardiac myofibril assembly. The protein is Myosin regulatory light chain 2, ventricular/cardiac muscle isoform of Bos taurus (Bovine).